Here is a 356-residue protein sequence, read N- to C-terminus: Pyruvate dehydrogenase E1 component subunit beta, mitochondrial (356 aa).

The transit peptide at methionine 1–alanine 25 directs the protein to the mitochondrion. Residue glutamate 85 coordinates thiamine diphosphate. K(+)-binding residues include isoleucine 138, alanine 186, isoleucine 187, aspartate 189, and asparagine 191.

In terms of assembly, tetramer of 2 alpha and 2 beta subunits. It depends on thiamine diphosphate as a cofactor.

It localises to the mitochondrion matrix. It carries out the reaction N(6)-[(R)-lipoyl]-L-lysyl-[protein] + pyruvate + H(+) = N(6)-[(R)-S(8)-acetyldihydrolipoyl]-L-lysyl-[protein] + CO2. The pyruvate dehydrogenase complex catalyzes the overall conversion of pyruvate to acetyl-CoA and CO(2). It contains multiple copies of three enzymatic components: pyruvate dehydrogenase (E1), dihydrolipoamide acetyltransferase (E2) and lipoamide dehydrogenase (E3). The sequence is that of Pyruvate dehydrogenase E1 component subunit beta, mitochondrial (pdhB) from Dictyostelium discoideum (Social amoeba).